The following is a 764-amino-acid chain: Molybdenum cofactor sulfurase 3 (764 aa).

At K228 the chain carries N6-(pyridoxal phosphate)lysine. The active site involves C394. The region spanning L607–L762 is the MOSC domain.

The protein belongs to the class-V pyridoxal-phosphate-dependent aminotransferase family. MOCOS subfamily. The cofactor is pyridoxal 5'-phosphate.

It catalyses the reaction Mo-molybdopterin + L-cysteine + AH2 = thio-Mo-molybdopterin + L-alanine + A + H2O. In terms of biological role, sulfurates the molybdenum cofactor. Sulfation of molybdenum is essential for xanthine dehydrogenase (XDH) and aldehyde oxidase (ADO) enzymes in which molybdenum cofactor is liganded by 1 oxygen and 1 sulfur atom in active form. This chain is Molybdenum cofactor sulfurase 3, found in Aedes aegypti (Yellowfever mosquito).